A 224-amino-acid polypeptide reads, in one-letter code: Deoxyribose-phosphate aldolase (224 aa).

Catalysis depends on Asp-91, which acts as the Proton donor/acceptor. Lys-152 acts as the Schiff-base intermediate with acetaldehyde in catalysis. Lys-181 (proton donor/acceptor) is an active-site residue.

Belongs to the DeoC/FbaB aldolase family. DeoC type 1 subfamily.

Its subcellular location is the cytoplasm. The catalysed reaction is 2-deoxy-D-ribose 5-phosphate = D-glyceraldehyde 3-phosphate + acetaldehyde. It functions in the pathway carbohydrate degradation; 2-deoxy-D-ribose 1-phosphate degradation; D-glyceraldehyde 3-phosphate and acetaldehyde from 2-deoxy-alpha-D-ribose 1-phosphate: step 2/2. Functionally, catalyzes a reversible aldol reaction between acetaldehyde and D-glyceraldehyde 3-phosphate to generate 2-deoxy-D-ribose 5-phosphate. This chain is Deoxyribose-phosphate aldolase, found in Mycoplasma pneumoniae (strain ATCC 29342 / M129 / Subtype 1) (Mycoplasmoides pneumoniae).